Here is a 76-residue protein sequence, read N- to C-terminus: Sec-independent protein translocase protein TatA (76 aa).

Residues 1–21 (MGGLSIWHWLIVLLIVALVFG) traverse the membrane as a helical segment. The tract at residues 43–76 (MKEGEAPADAQQLPRSGSVDVNAKETTRSDSNKA) is disordered. Residues 64–76 (NAKETTRSDSNKA) show a composition bias toward basic and acidic residues.

This sequence belongs to the TatA/E family. In terms of assembly, the Tat system comprises two distinct complexes: a TatABC complex, containing multiple copies of TatA, TatB and TatC subunits, and a separate TatA complex, containing only TatA subunits. Substrates initially bind to the TatABC complex, which probably triggers association of the separate TatA complex to form the active translocon.

The protein localises to the cell inner membrane. Its function is as follows. Part of the twin-arginine translocation (Tat) system that transports large folded proteins containing a characteristic twin-arginine motif in their signal peptide across membranes. TatA could form the protein-conducting channel of the Tat system. This Burkholderia lata (strain ATCC 17760 / DSM 23089 / LMG 22485 / NCIMB 9086 / R18194 / 383) protein is Sec-independent protein translocase protein TatA.